Reading from the N-terminus, the 124-residue chain is Ribonuclease pancreatic (124 aa).

The span at 1–13 (KESAAAKFERQHM) shows a compositional bias: basic and acidic residues. The disordered stretch occupies residues 1 to 24 (KESAAAKFERQHMDPSMSSASSSN). 2 residues coordinate substrate: K7 and R10. Catalysis depends on H12, which acts as the Proton acceptor. Intrachain disulfides connect C26–C84, C40–C95, C58–C110, and C65–C72. Substrate-binding positions include 41–45 (KPVNT), K66, and R85. Residue H119 is the Proton donor of the active site.

The protein belongs to the pancreatic ribonuclease family. Monomer. Interacts with and forms tight 1:1 complexes with RNH1. Dimerization of two such complexes may occur. Interaction with RNH1 inhibits this protein. In terms of tissue distribution, pancreas.

The protein localises to the secreted. It carries out the reaction an [RNA] containing cytidine + H2O = an [RNA]-3'-cytidine-3'-phosphate + a 5'-hydroxy-ribonucleotide-3'-[RNA].. The catalysed reaction is an [RNA] containing uridine + H2O = an [RNA]-3'-uridine-3'-phosphate + a 5'-hydroxy-ribonucleotide-3'-[RNA].. Endonuclease that catalyzes the cleavage of RNA on the 3' side of pyrimidine nucleotides. Acts on single-stranded and double-stranded RNA. The polypeptide is Ribonuclease pancreatic (RNASE1) (Dama dama (Fallow deer)).